We begin with the raw amino-acid sequence, 188 residues long: Cell division protein SepF (188 aa).

The protein belongs to the SepF family. As to quaternary structure, homodimer. Interacts with FtsZ.

The protein resides in the cytoplasm. Its function is as follows. Cell division protein that is part of the divisome complex and is recruited early to the Z-ring. Probably stimulates Z-ring formation, perhaps through the cross-linking of FtsZ protofilaments. Its function overlaps with FtsA. This Synechococcus sp. (strain CC9605) protein is Cell division protein SepF.